We begin with the raw amino-acid sequence, 478 residues long: UDP-N-acetylmuramate--L-alanine ligase (478 aa).

ATP is bound at residue 120–126 (GSHGKTT).

The protein belongs to the MurCDEF family.

It localises to the cytoplasm. It catalyses the reaction UDP-N-acetyl-alpha-D-muramate + L-alanine + ATP = UDP-N-acetyl-alpha-D-muramoyl-L-alanine + ADP + phosphate + H(+). It participates in cell wall biogenesis; peptidoglycan biosynthesis. Its function is as follows. Cell wall formation. This is UDP-N-acetylmuramate--L-alanine ligase from Rickettsia felis (strain ATCC VR-1525 / URRWXCal2) (Rickettsia azadi).